We begin with the raw amino-acid sequence, 68 residues long: Large ribosomal subunit protein bL31 (68 aa).

Zn(2+) is bound by residues C16, C18, C36, and C39.

Belongs to the bacterial ribosomal protein bL31 family. Type A subfamily. In terms of assembly, part of the 50S ribosomal subunit. The cofactor is Zn(2+).

Functionally, binds the 23S rRNA. This chain is Large ribosomal subunit protein bL31, found in Sorangium cellulosum (strain So ce56) (Polyangium cellulosum (strain So ce56)).